The sequence spans 211 residues: Recombination protein RecR (211 aa).

A C4-type zinc finger spans residues 70-85 (CRECFLITDREVCPIC). In terms of domain architecture, Toprim spans 93–190 (KFICVVEESQ…KITRTAYGFQ (98 aa)).

The protein belongs to the RecR family.

Functionally, may play a role in DNA repair. It seems to be involved in an RecBC-independent recombinational process of DNA repair. It may act with RecF and RecO. This Aquifex aeolicus (strain VF5) protein is Recombination protein RecR.